An 83-amino-acid polypeptide reads, in one-letter code: RNA-binding protein Hfq (83 aa).

One can recognise a Sm domain in the interval 10-70 (DTFLNQVRKE…ISTVMPLRPI (61 aa)).

This sequence belongs to the Hfq family. In terms of assembly, homohexamer.

Its function is as follows. RNA chaperone that binds small regulatory RNA (sRNAs) and mRNAs to facilitate mRNA translational regulation in response to envelope stress, environmental stress and changes in metabolite concentrations. Also binds with high specificity to tRNAs. In Desulfitobacterium hafniense (strain DSM 10664 / DCB-2), this protein is RNA-binding protein Hfq.